We begin with the raw amino-acid sequence, 120 residues long: Immunoglobulin kappa variable 2-30 (120 aa).

An N-terminal signal peptide occupies residues methionine 1–glycine 20. A framework-1 region spans residues aspartate 21 to cysteine 43. One can recognise an Ig-like domain in the interval aspartate 21–proline 120. A disulfide bridge connects residues cysteine 43 and cysteine 113. Residues arginine 44 to asparagine 59 are complementarity-determining-1. Residues tryptophan 60–tyrosine 74 are framework-2. The tract at residues lysine 75–serine 81 is complementarity-determining-2. Positions glycine 82–cysteine 113 are framework-3. The interval methionine 114 to proline 120 is complementarity-determining-3.

As to quaternary structure, immunoglobulins are composed of two identical heavy chains and two identical light chains; disulfide-linked.

The protein resides in the secreted. It localises to the cell membrane. In terms of biological role, v region of the variable domain of immunoglobulin light chains that participates in the antigen recognition. Immunoglobulins, also known as antibodies, are membrane-bound or secreted glycoproteins produced by B lymphocytes. In the recognition phase of humoral immunity, the membrane-bound immunoglobulins serve as receptors which, upon binding of a specific antigen, trigger the clonal expansion and differentiation of B lymphocytes into immunoglobulins-secreting plasma cells. Secreted immunoglobulins mediate the effector phase of humoral immunity, which results in the elimination of bound antigens. The antigen binding site is formed by the variable domain of one heavy chain, together with that of its associated light chain. Thus, each immunoglobulin has two antigen binding sites with remarkable affinity for a particular antigen. The variable domains are assembled by a process called V-(D)-J rearrangement and can then be subjected to somatic hypermutations which, after exposure to antigen and selection, allow affinity maturation for a particular antigen. The sequence is that of Immunoglobulin kappa variable 2-30 from Homo sapiens (Human).